Here is a 154-residue protein sequence, read N- to C-terminus: Zinc finger HIT domain-containing protein 1 (154 aa).

Residues 1-72 (MVEKKTSVRS…DTGKKKKKTR (72 aa)) form a disordered region. Residues 14–23 (GQRRVLDRAA) are compositionally biased toward basic and acidic residues. A coiled-coil region spans residues 23–39 (ARQRRINRQLEALENDN). Residues 38-47 (DNFQDDPHAG) carry the Nuclear localization signal motif. Residues 72-110 (RGDHFKLRFRKNFQALLEEQNLSVAEGPNYLTACAGPPS) are interaction with NR1D2. Residue threonine 103 is modified to Phosphothreonine; by MAPK11 and MAPK14. Positions 117, 120, 128, 131, 136, 140, 144, and 149 each coordinate Zn(2+). An HIT-type zinc finger spans residues 117-149 (CAVCGFPSPYTCVSCGARYCTVRCLGTHQETRC).

This sequence belongs to the ZNHIT1 family. In terms of assembly, component of the chromatin-remodeling SRCAP complex composed of at least SRCAP, DMAP1, RUVBL1, RUVBL2, ACTL6A, YEATS4, ACTR6 and ZNHIT1. Interacts with MAPK11 and MAPK14. Interacts with NR1D1 and NR2D2. Interacts (via HIT-type zinc finger) with the RUVBL1/RUVBL2 complex in the presence of ADP. Interacts with histone deacetylase HDAC1. Interacts with histone H2AZ1; the interaction results in recruitment of H2AZ1 to the MYOG promoter region. Interacts with PCID2; the interaction results in inhibition of SRCAP complex activity, preventing the deposition of histone variant H2Az1 to lymphoid fate regulator genes and restricting lymphoid lineage commitment. In terms of processing, phosphorylated on Thr by MAPK11 or MAPK14. Phosphorylation is required for MYOG induction, for deposition of histone H2AZ1 at the MYOG promoter and for SRCAP complex integrity.

Its subcellular location is the nucleus. Plays a role in chromatin remodeling by promoting the incorporation of histone variant H2AZ1/H2A.Z into the genome to regulate gene expression. Promotes SRCAP complex-mediated deposition of histone variant H2AZ1 to lymphoid fate regulator genes, enhancing lymphoid lineage commitment. Recruited to the promoter of the transcriptional activator MYOG at the early stages of muscle differentiation where it mediates binding of histone H2AZ1 to chromatin and induces muscle-specific gene expression. Maintains hematopoietic stem cell (HSC) quiescence by determining the chromatin accessibility at distal enhancers of HSC quiescence genes such as PTEN, FSTL1 and KLF4, enhancing deposition of H2AZ1 to promote their sustained transcription and restricting PI3K-AKT signaling inhibition. Plays a role in intestinal stem cell maintenance by promoting H2AZ1 deposition at the transcription start sites of genes involved in intestinal stem cell fate determination including LGR5, TGFB1 and TGFBR2, thereby contributing to gene transcription. Promotes phosphorylation of the H2AZ1 chaperone VPS72/YL1 which enhances the interaction between HZAZ1 and VPS72. Regulates the entry of male germ cells into meiosis by controlling histone H2AZ1 deposition which facilitates the expression of meiotic genes such as MEIOSIN, leading to the initiation of meiosis. Required for postnatal heart function through its role in maintenance of cardiac Ca(2+) homeostasis by modulating the expression of Ca(2+)-regulating proteins CASQ1 and ATP2A2/SERCA2A via deposition of histone H2AZ1 at their promoters. During embryonic heart development, required for mitochondrial maturation and oxidative metabolism by functioning through H2AZ1 deposition to activate transcription of metabolic genes and is also required to maintain the stability of the respiratory complex. In neural cells, increases deposition of the H2AZ1 histone variant and promotes neurite growth. Plays a role in TP53/p53-mediated apoptosis induction by stimulating the transcriptional activation of several proapoptotic p53 target genes such as PMAIP1/NOXA and BBC3/PUMA. Mediates cell cycle arrest induced in response to gamma-irradiation by enhancing recruitment of TP53/p53 to the promoter of the cell cycle inhibitor CDKN1A, leading to its transcriptional activation. Recruited to the promoter of cyclin-dependent kinase CDK6 and inhibits its transcription, possibly by decreasing the acetylation level of histone H4, leading to cell cycle arrest at the G1 phase. Plays a role in lens fiber cell differentiation by regulating the expression of cell cycle regulator CDKN1A/p21Cip1. Binds to transcriptional repressor NR1D2 and relieves it of its inhibitory effect on the transcription of apolipoprotein APOC3 without affecting its DNA-binding activity. The protein is Zinc finger HIT domain-containing protein 1 (ZNHIT1) of Bos taurus (Bovine).